The sequence spans 367 residues: Centromere protein L (367 aa).

It belongs to the CENP-L/IML3 family.

It is found in the nucleus. Its subcellular location is the chromosome. The protein resides in the centromere. In terms of biological role, probable component of a centromeric complex involved in assembly of kinetochore proteins, mitotic progression and chromosome segregation. The sequence is that of Centromere protein L (cenpl) from Danio rerio (Zebrafish).